A 195-amino-acid chain; its full sequence is Interferon omega-1 (195 aa).

Positions 1 to 23 (MAFVLSLLMALVLVSYGPGGSLG) are cleaved as a signal peptide. Cystine bridges form between Cys24/Cys122 and Cys52/Cys162.

The protein belongs to the alpha/beta interferon family.

The protein localises to the secreted. The protein is Interferon omega-1 (IFNW1) of Bos taurus (Bovine).